We begin with the raw amino-acid sequence, 305 residues long: Sulfate adenylyltransferase subunit 2 (305 aa).

This sequence belongs to the PAPS reductase family. CysD subfamily. In terms of assembly, heterodimer composed of CysD, the smaller subunit, and CysN.

The catalysed reaction is sulfate + ATP + H(+) = adenosine 5'-phosphosulfate + diphosphate. Its pathway is sulfur metabolism; hydrogen sulfide biosynthesis; sulfite from sulfate: step 1/3. Its function is as follows. With CysN forms the ATP sulfurylase (ATPS) that catalyzes the adenylation of sulfate producing adenosine 5'-phosphosulfate (APS) and diphosphate, the first enzymatic step in sulfur assimilation pathway. APS synthesis involves the formation of a high-energy phosphoric-sulfuric acid anhydride bond driven by GTP hydrolysis by CysN coupled to ATP hydrolysis by CysD. In Azotobacter vinelandii (strain DJ / ATCC BAA-1303), this protein is Sulfate adenylyltransferase subunit 2.